Reading from the N-terminus, the 366-residue chain is Phospho-2-dehydro-3-deoxyheptonate aldolase (366 aa).

It belongs to the class-I DAHP synthase family.

It catalyses the reaction D-erythrose 4-phosphate + phosphoenolpyruvate + H2O = 7-phospho-2-dehydro-3-deoxy-D-arabino-heptonate + phosphate. It participates in metabolic intermediate biosynthesis; chorismate biosynthesis; chorismate from D-erythrose 4-phosphate and phosphoenolpyruvate: step 1/7. Functionally, stereospecific condensation of phosphoenolpyruvate (PEP) and D-erythrose-4-phosphate (E4P) giving rise to 3-deoxy-D-arabino-heptulosonate-7-phosphate (DAHP). This Corynebacterium glutamicum (strain ATCC 13032 / DSM 20300 / JCM 1318 / BCRC 11384 / CCUG 27702 / LMG 3730 / NBRC 12168 / NCIMB 10025 / NRRL B-2784 / 534) protein is Phospho-2-dehydro-3-deoxyheptonate aldolase (aroG).